A 344-amino-acid polypeptide reads, in one-letter code: MAALIEKFWFGHHPKGLMLLLNVLFWPVFWPLSKLFGFISVRRRNKYQTGEKVAYRAPVPVVVVGNITAGGNGKTPVVVWLVEQLQAKGLKPGVVSRGYGGKAPHYPYLVEDKTSTDLVGDEPVLIRRRTGAPVAVSPIRSDAVMMLLEHDVDVIITDDGLQHYALARDIEFVVIDGQRRFGNQQLLPLGPLRETCDRLADVDFLICNGGKAQKNEAPMHLQPSALINVKTGERCSINELENIVAMAGIGHPPRFFKTLEELGVTPVHCQPFTDHQAFSETELKHLAQQGQHLVMTEKDAVKCHAFAQSNWWYVPVDAVIPTSNATAIINRIIKVKEEYGSPSA.

Residue 68 to 75 participates in ATP binding; sequence TAGGNGKT.

The protein belongs to the LpxK family.

It catalyses the reaction a lipid A disaccharide + ATP = a lipid IVA + ADP + H(+). It functions in the pathway glycolipid biosynthesis; lipid IV(A) biosynthesis; lipid IV(A) from (3R)-3-hydroxytetradecanoyl-[acyl-carrier-protein] and UDP-N-acetyl-alpha-D-glucosamine: step 6/6. Its function is as follows. Transfers the gamma-phosphate of ATP to the 4'-position of a tetraacyldisaccharide 1-phosphate intermediate (termed DS-1-P) to form tetraacyldisaccharide 1,4'-bis-phosphate (lipid IVA). The sequence is that of Tetraacyldisaccharide 4'-kinase from Photobacterium profundum (strain SS9).